The chain runs to 336 residues: Flavonoid 6-O-methyltransferase 4 (336 aa).

Tyrosine 140 and aspartate 203 together coordinate S-adenosyl-L-methionine. Histidine 241 functions as the Proton acceptor in the catalytic mechanism.

This sequence belongs to the class I-like SAM-binding methyltransferase superfamily. Cation-independent O-methyltransferase family. In terms of assembly, homodimer. Expressed in leaves.

The catalysed reaction is ladanein + S-adenosyl-L-methionine = salvigenin + S-adenosyl-L-homocysteine + H(+). It catalyses the reaction scutellarein 7-methyl ether + S-adenosyl-L-methionine = cirsimaritin + S-adenosyl-L-homocysteine + H(+). Its pathway is flavonoid metabolism. Its function is as follows. Flavonoid 6-O-methyltransferase involved in the biosynthesis of polymethoxylated flavonoids natural products such as nevadensin and salvigenin (SALV), aroma compounds which contribute to the flavor of sweet basil, and exhibit pharmacological activities such as anti-allergic, anti-oxidant, antibacterial, anti-proliferative, and anti-inflammatory effects. Catalyzes S-adenosylmethionine-dependent regioselective 6-O-methylation of flavonoids; active on various hydroxylated flavonoid substrates, including scutellarein-7-methyl ether (SCU7Me) and ladanein (LAD). The chain is Flavonoid 6-O-methyltransferase 4 from Ocimum basilicum (Sweet basil).